The chain runs to 190 residues: Segregation and condensation protein B (190 aa).

Belongs to the ScpB family. As to quaternary structure, homodimer. Homodimerization may be required to stabilize the binding of ScpA to the Smc head domains. Component of a cohesin-like complex composed of ScpA, ScpB and the Smc homodimer, in which ScpA and ScpB bind to the head domain of Smc. The presence of the three proteins is required for the association of the complex with DNA.

It localises to the cytoplasm. Participates in chromosomal partition during cell division. May act via the formation of a condensin-like complex containing Smc and ScpA that pull DNA away from mid-cell into both cell halves. The sequence is that of Segregation and condensation protein B from Alkaliphilus metalliredigens (strain QYMF).